Consider the following 283-residue polypeptide: 2-hydroxymuconate semialdehyde hydrolase (283 aa).

Residues 32–262 form the AB hydrolase-1 domain; that stretch reads LMMIHGSGPG…QCGHWTQIEH (231 aa). Catalysis depends on residues serine 107, aspartate 228, and histidine 256.

Belongs to the DmpD/TodF/XylF esterase family.

It carries out the reaction (2Z,4E)-2-hydroxy-6-oxohexa-2,4-dienoate + H2O = 2-oxopent-4-enoate + formate + H(+). Its pathway is aromatic compound metabolism; benzoate degradation via hydroxylation. Functionally, catalyzes the conversion of 2-hydroxymuconate semialdehyde to 2-hydroxypent-2,4-dienoate. The protein is 2-hydroxymuconate semialdehyde hydrolase (dmpD) of Pseudomonas sp. (strain CF600).